The sequence spans 493 residues: MAKELKELTPRSVNYSQWYQDLVIKADLAENSAVRGCMVIKPYGYAIWEKMQRILDDMFKETGHVNAYFPLLIPKSFLSKEAEHVEGFAKECAVVTHYRLKTNHDGTGVVVDPAAKLEEELIIRPTSETIIWNTYRNWIQSYRDLPILCNQWANVMRWEMRTRLFLRTAEFLWQEGHTAHATREEAEIEAKKMQDVYANFAENYMAMPVIKGVKSESERFAGALDTYTIEAMMQDGKALQAGTSHFLGQNFGKAFDVTFIDKNGKSDYAWATSWGVSTRLIGALIMSHSDDNGLVLPPHLAPIQVVIVPIYRSAEQLTQISEKVAGIVAKLKALGISVKYDDADNKKPGWKFAEYELKGVPVRLAMGGRDLENNTIEVMRRDTLEKETITCDGIEEYVKNLLEEIQANIFKKAYDHREANIINVDTYEEFKEKIEDGVFIMAHWDGTPETEELIKNETKATIRCIPLAGDKTPGKCMVTGKPSACRVLFARAY.

It belongs to the class-II aminoacyl-tRNA synthetase family. ProS type 3 subfamily. As to quaternary structure, homodimer.

It localises to the cytoplasm. The catalysed reaction is tRNA(Pro) + L-proline + ATP = L-prolyl-tRNA(Pro) + AMP + diphosphate. Its function is as follows. Catalyzes the attachment of proline to tRNA(Pro) in a two-step reaction: proline is first activated by ATP to form Pro-AMP and then transferred to the acceptor end of tRNA(Pro). The sequence is that of Proline--tRNA ligase from Parabacteroides distasonis (strain ATCC 8503 / DSM 20701 / CIP 104284 / JCM 5825 / NCTC 11152).